The chain runs to 937 residues: Protein translocase subunit SecA (937 aa).

ATP is bound by residues Gln-87, 105-109 (GEGKT), and Asp-494. A disordered region spans residues 881–937 (RGLNYIGPDEGGRASVHSDAEEYGGGTPAAAGTRRERREAARAEGKGKRGPKSRRKH). Basic and acidic residues-rich tracts occupy residues 890–900 (EGGRASVHSDA) and 913–927 (TRRERREAARAEGKG). The span at 928-937 (KRGPKSRRKH) shows a compositional bias: basic residues.

Belongs to the SecA family. In terms of assembly, monomer and homodimer. Part of the essential Sec protein translocation apparatus which comprises SecA, SecYEG and auxiliary proteins SecDF. Other proteins may also be involved.

Its subcellular location is the cell membrane. It is found in the cytoplasm. The catalysed reaction is ATP + H2O + cellular proteinSide 1 = ADP + phosphate + cellular proteinSide 2.. Part of the Sec protein translocase complex. Interacts with the SecYEG preprotein conducting channel. Has a central role in coupling the hydrolysis of ATP to the transfer of proteins into and across the cell membrane, serving as an ATP-driven molecular motor driving the stepwise translocation of polypeptide chains across the membrane. In Nocardia farcinica (strain IFM 10152), this protein is Protein translocase subunit SecA.